A 676-amino-acid chain; its full sequence is Envelope glycoprotein (676 aa).

An N-terminal signal peptide occupies residues 1-32; it reads MGASGILQLPRERFRKTSFFVWVIILFHKVFS. Over 33–650 the chain is Extracellular; it reads IPLGVVHNNT…GSNWWTGWKQ (618 aa). An N-linked (GlcNAc...) asparagine; by host glycan is attached at N40. Cystine bridges form between C53/C609, C108/C135, C121/C147, C511/C556, and C601/C608. The receptor-binding stretch occupies residues 54 to 201; the sequence is RDKLSSTSQL…DFFQSPPLHE (148 aa). N-linked (GlcNAc...) asparagine; by host glycosylation is found at N204, N228, N257, N268, and N296. Residues 305-485 are mucin-like region; sequence ELSFVPVPET…LSGPGFLTNT (181 aa). Positions 356–463 are disordered; the sequence is IKGKDTMPTT…PTTLPEQHTA (108 aa). Positions 361 to 374 are enriched in low complexity; it reads TMPTTVTGVPTTTP. The segment covering 402 to 422 has biased composition (polar residues); that stretch reads TTQPAKTTSQPTNSTESTTLN. N414 carries N-linked (GlcNAc...) asparagine; by host glycosylation. Residues 423–440 are compositionally biased toward low complexity; the sequence is PTSEPSSRGTGPSSPTVP. N441 carries an N-linked (GlcNAc...) asparagine; by host glycan. Residues 452–463 are compositionally biased toward polar residues; the sequence is TTPTTLPEQHTA. The interval 524 to 539 is fusion peptide; sequence GAAIGLAWIPYFGPAA. Residues 554–595 are a coiled coil; sequence LICGLRQLANETTQALQLFLRATTELRTFSILNRKAIDFLLQ. A glycan (N-linked (GlcNAc...) asparagine; by host) is linked at N563. A coiled-coil region spans residues 615 to 634; the sequence is WTKNITDKIDQIIHDFVDNN. The N-linked (GlcNAc...) asparagine; by host glycan is linked to N618. A helical membrane pass occupies residues 651–671; that stretch reads WVPAGIGITGVIIAIIALLCI. Residues C670 and C672 are each lipidated (S-palmitoyl cysteine; by host). At 672–676 the chain is on the cytoplasmic side; that stretch reads CKFML.

This sequence belongs to the filoviruses glycoprotein family. Homotrimer; each monomer consists of a GP1 and a GP2 subunit linked by disulfide bonds. The resulting peplomers (GP1,2) protrude from the virus surface as spikes. GP1 and GP2delta are part of GP1,2delta soluble complexes released by ectodomain shedding. GP1,2 interacts with host integrin ITGAV/alpha-V and CLEC10A. Also binds human CD209 and CLEC4M (collectively referred to as DC-SIGN(R)), as well as human FOLR1. Interacts with host entry receptor NPC1. In terms of processing, the signal peptide region modulates GP's high mannose glycosylation, thereby determining the efficiency of the interactions with DC-SIGN(R). Post-translationally, N-glycosylated. O-glycosylated in the mucin-like region. In terms of processing, palmitoylation of GP2 is not required for its function. Post-translationally, specific enzymatic cleavages in vivo yield mature proteins. The precursor is processed into GP1 and GP2 by host cell furin in the trans Golgi, and maybe by other host proteases, to yield the mature GP1 and GP2 proteins. The cleavage site corresponds to the furin optimal cleavage sequence [KR]-X-[KR]-R. This cleavage does not seem to be required for function. After the internalization of the virus into cell endosomes, GP1 C-terminus is removed by the endosomal proteases cathepsin B, cathepsin L, or both, leaving a 19-kDa N-terminal fragment which is further digested by cathepsin B. Proteolytic processing of GP1,2 by host ADAM17 can remove the transmembrane anchor of GP2 and leads to shedding of complexes consisting in GP1 and truncated GP2 (GP1,2delta).

The protein resides in the virion membrane. It is found in the host cell membrane. The protein localises to the secreted. Its function is as follows. GP1 is responsible for binding to the receptor(s) on target cells. Interacts with CD209/DC-SIGN and CLEC4M/DC-SIGNR which act as cofactors for virus entry into the host cell. Binding to CD209 and CLEC4M, which are respectively found on dendritic cells (DCs), and on endothelial cells of liver sinusoids and lymph node sinuses, facilitate infection of macrophages and endothelial cells. These interactions not only facilitate virus cell entry, but also allow capture of viral particles by DCs and subsequent transmission to susceptible cells without DCs infection (trans infection). Binding to the macrophage specific lectin CLEC10A also seems to enhance virus infectivity. Interaction with FOLR1/folate receptor alpha may be a cofactor for virus entry in some cell types, although results are contradictory. Members of the Tyro3 receptor tyrosine kinase family also seem to be cell entry factors in filovirus infection. Once attached, the virions are internalized through clathrin-dependent endocytosis and/or macropinocytosis. After internalization of the virus into the endosomes of the host cell, proteolysis of GP1 by two cysteine proteases, CTSB/cathepsin B and CTSL/cathepsin L presumably induces a conformational change of GP2, unmasking its fusion peptide and initiating membranes fusion. In terms of biological role, GP2 acts as a class I viral fusion protein. Under the current model, the protein has at least 3 conformational states: pre-fusion native state, pre-hairpin intermediate state, and post-fusion hairpin state. During viral and target cell membrane fusion, the coiled coil regions (heptad repeats) assume a trimer-of-hairpins structure, positioning the fusion peptide in close proximity to the C-terminal region of the ectodomain. The formation of this structure appears to drive apposition and subsequent fusion of viral and target cell membranes. Responsible for penetration of the virus into the cell cytoplasm by mediating the fusion of the membrane of the endocytosed virus particle with the endosomal membrane. Low pH in endosomes induces an irreversible conformational change in GP2, releasing the fusion hydrophobic peptide. GP1,2 which is the disulfid-linked complex of GP1 and GP2, mediates endothelial cell activation and decreases endothelial barrier function. Mediates activation of primary macrophages. At terminal stages of the viral infection, when its expression is high, GP1,2 down-modulates the expression of various host cell surface molecules that are essential for immune surveillance and cell adhesion. Down-modulates integrins ITGA1, ITGA2, ITGA3, ITGA4, ITGA5, ITGA6, ITGAV and ITGB1. GP1,2 alters the cellular recycling of the dimer alpha-V/beta-3 via a dynamin-dependent pathway. Decrease in the host cell surface expression of various adhesion molecules may lead to cell detachment, contributing to the disruption of blood vessel integrity and hemorrhages developed during Ebola virus infection (cytotoxicity). This cytotoxicity appears late in the infection, only after the massive release of viral particles by infected cells. Down-modulation of host MHC-I, leading to altered recognition by immune cells, may explain the immune suppression and inflammatory dysfunction linked to Ebola infection. Also down-modulates EGFR surface expression. Counteracts the antiviral effect of host tetherin. Functionally, GP2delta is part of the complex GP1,2delta released by host ADAM17 metalloprotease. This secreted complex may play a role in the pathogenesis of the virus by efficiently blocking the neutralizing antibodies that would otherwise neutralize the virus surface glycoproteins GP1,2. Might therefore contribute to the lack of inflammatory reaction seen during infection in spite the of extensive necrosis and massive virus production. GP1,2delta does not seem to be involved in activation of primary macrophages. This chain is Envelope glycoprotein (GP), found in Tai Forest ebolavirus (strain Cote d'Ivoire-94) (TAFV).